We begin with the raw amino-acid sequence, 477 residues long: Putative 4-(hydroxymethyl)benzenesulfonate dehydrogenase TsaD2 (477 aa).

NAD(+) contacts are provided by residues W154 to N155, K178 to E181, and G230 to S231. The active-site Proton acceptor is E252. L253 provides a ligand contact to NAD(+). The Nucleophile role is filled by C286. E381 contributes to the NAD(+) binding site.

The protein belongs to the aldehyde dehydrogenase family. Homodimer.

It catalyses the reaction 4-(hydroxymethyl)benzenesulfonate + NAD(+) = 4-formylbenzenesulfonate + NADH + H(+). Functionally, involved in the toluene-4-sulfonate degradation pathway. Does not discriminate between the sulfonate and the carboxyl substituents and can also be involved in the p-toluenecarboxylate degradation pathway. This is Putative 4-(hydroxymethyl)benzenesulfonate dehydrogenase TsaD2 (tsaD2) from Comamonas testosteroni (Pseudomonas testosteroni).